The following is a 162-amino-acid chain: ATP synthase subunit b (162 aa).

The chain crosses the membrane as a helical span at residues Leu10 to Tyr29.

The protein belongs to the ATPase B chain family. In terms of assembly, F-type ATPases have 2 components, F(1) - the catalytic core - and F(0) - the membrane proton channel. F(1) has five subunits: alpha(3), beta(3), gamma(1), delta(1), epsilon(1). F(0) has three main subunits: a(1), b(2) and c(10-14). The alpha and beta chains form an alternating ring which encloses part of the gamma chain. F(1) is attached to F(0) by a central stalk formed by the gamma and epsilon chains, while a peripheral stalk is formed by the delta and b chains.

The protein resides in the cell membrane. Functionally, f(1)F(0) ATP synthase produces ATP from ADP in the presence of a proton or sodium gradient. F-type ATPases consist of two structural domains, F(1) containing the extramembraneous catalytic core and F(0) containing the membrane proton channel, linked together by a central stalk and a peripheral stalk. During catalysis, ATP synthesis in the catalytic domain of F(1) is coupled via a rotary mechanism of the central stalk subunits to proton translocation. Component of the F(0) channel, it forms part of the peripheral stalk, linking F(1) to F(0). This is ATP synthase subunit b from Symbiobacterium thermophilum (strain DSM 24528 / JCM 14929 / IAM 14863 / T).